The sequence spans 596 residues: Protein kinase C iota type (596 aa).

Positions 1-12 (MPTQRDSSTMSH) are enriched in polar residues. The interval 1–23 (MPTQRDSSTMSHTVAGGGSGDHS) is disordered. At Pro-2 the chain carries N-acetylproline. The required for interaction with RAB2 stretch occupies residues 2–28 (PTQRDSSTMSHTVAGGGSGDHSHQVRV). The interval 2–253 (PTQRDSSTMS…KASSSLGLQD (252 aa)) is regulatory domain. The residue at position 3 (Thr-3) is a Phosphothreonine. Ser-7 and Ser-8 each carry phosphoserine. Thr-9 carries the phosphothreonine modification. The region spanning 25 to 108 (QVRVKAYYRG…SELLIHVFPC (84 aa)) is the PB1 domain. An interaction with PARD6A region spans residues 72 to 91 (DEEGDPCTVSSQLELEEAFR). Residues 125–134 (YRRGARRWRK) carry the Pseudosubstrate motif. The segment at 140–190 (GHTFQAKRFNRRAHCAICTDRIWGLGRQGYKCINCKLLVHKKCHKLVTIEC) adopts a Phorbol-ester/DAG-type zinc-finger fold. A disordered region spans residues 221–246 (PSSHESLDQVGEEKEAMNTRESGKAS). Residues 225–243 (ESLDQVGEEKEAMNTRESG) are compositionally biased toward basic and acidic residues. The Protein kinase domain occupies 254-522 (FDLLRVIGRG…FADIQGHPFF (269 aa)). Position 260–268 (260–268 (IGRGSYAKV)) interacts with ATP. Tyr-265 and Tyr-280 each carry phosphotyrosine; by SRC. Residue Lys-283 coordinates ATP. Phosphotyrosine; by SRC is present on Tyr-334. Residue Asp-378 is the Proton acceptor of the active site. Thr-412 bears the Phosphothreonine; by PDPK1 mark. One can recognise an AGC-kinase C-terminal domain in the interval 523–594 (RNVDWDMMEQ…INPLLMSAEE (72 aa)). Position 564 is a phosphothreonine (Thr-564).

This sequence belongs to the protein kinase superfamily. AGC Ser/Thr protein kinase family. PKC subfamily. As to quaternary structure, forms a complex with SQSTM1 and MP2K5. Interacts directly with SQSTM1. Interacts with IKBKB. Interacts with PARD6A, PARD6B and PARD6G. Part of a quaternary complex containing aPKC, PARD3, a PARD6 protein (PARD6A, PARD6B or PARD6G) and a GTPase protein (CDC42 or RAC1). Part of a complex with LLGL1 and PARD6B. Interacts with ADAP1/CENTA1. Interaction with SMG1, through the ZN-finger domain, activates the kinase activity. Interacts with CDK7. Forms a complex with RAB2A and GAPDH involved in recruitment onto the membrane of vesicular tubular clusters (VTCs). Interacts with ECT2 ('Thr-359' phosphorylated form). Interacts with VAMP2. Interacts with WDFY2 (via WD repeats 1-3). Post-translationally, phosphorylation at Thr-412 in the activation loop is not mandatory for activation. Upon neuronal growth factor (NGF) stimulation, phosphorylated by SRC at Tyr-265, Tyr-280 and Tyr-334. Phosphorylation at Tyr-265 facilitates binding to KPNB1/importin-beta regulating entry of PRKCI into the nucleus. Phosphorylation on Tyr-334 is important for NF-kappa-B stimulation. Phosphorylated at Thr-564 during the initial phase of long term potentiation.

The protein localises to the cytoplasm. It localises to the membrane. It is found in the endosome. The protein resides in the nucleus. The catalysed reaction is L-seryl-[protein] + ATP = O-phospho-L-seryl-[protein] + ADP + H(+). It carries out the reaction L-threonyl-[protein] + ATP = O-phospho-L-threonyl-[protein] + ADP + H(+). Atypical PKCs (PRKCI and PRKCZ) exhibit an elevated basal enzymatic activity (that may be due to the interaction with SMG1 or SQSTM1) and are not regulated by diacylglycerol, phosphatidylserine, phorbol esters or calcium ions. Two specific sites, Thr-412 (activation loop of the kinase domain) and Thr-564 (turn motif), need to be phosphorylated for its full activation. Might also be a target for novel lipid activators that are elevated during nutrient-stimulated insulin secretion. Functionally, calcium- and diacylglycerol-independent serine/ threonine-protein kinase that plays a general protective role against apoptotic stimuli, is involved in NF-kappa-B activation, cell survival, differentiation and polarity, and contributes to the regulation of microtubule dynamics in the early secretory pathway. Is necessary for BCR-ABL oncogene-mediated resistance to apoptotic drug in leukemia cells, protecting leukemia cells against drug-induced apoptosis. In cultured neurons, prevents amyloid beta protein-induced apoptosis by interrupting cell death process at a very early step. In glioblastoma cells, may function downstream of phosphatidylinositol 3-kinase (PI(3)K) and PDPK1 in the promotion of cell survival by phosphorylating and inhibiting the pro-apoptotic factor BAD. Can form a protein complex in non-small cell lung cancer (NSCLC) cells with PARD6A and ECT2 and regulate ECT2 oncogenic activity by phosphorylation, which in turn promotes transformed growth and invasion. In response to nerve growth factor (NGF), acts downstream of SRC to phosphorylate and activate IRAK1, allowing the subsequent activation of NF-kappa-B and neuronal cell survival. Functions in the organization of the apical domain in epithelial cells by phosphorylating EZR. This step is crucial for activation and normal distribution of EZR at the early stages of intestinal epithelial cell differentiation. Forms a protein complex with LLGL1 and PARD6B independently of PARD3 to regulate epithelial cell polarity. Plays a role in microtubule dynamics in the early secretory pathway through interaction with RAB2A and GAPDH and recruitment to vesicular tubular clusters (VTCs). In human coronary artery endothelial cells (HCAEC), is activated by saturated fatty acids and mediates lipid-induced apoptosis. Involved in early synaptic long term potentiation phase in CA1 hippocampal cells and short term memory formation. The polypeptide is Protein kinase C iota type (PRKCI) (Pongo abelii (Sumatran orangutan)).